A 132-amino-acid polypeptide reads, in one-letter code: Pollen allergen Phl p 6 (132 aa).

The first 22 residues, 1 to 22, serve as a signal peptide directing secretion; it reads MVAMFLAVAVVLGLATSPTAEG.

The protein belongs to the Poa p IX/Phl p VI allergen family.

The sequence is that of Pollen allergen Phl p 6 (PHLPVI) from Phleum pratense (Common timothy).